The chain runs to 510 residues: Bifunctional purine biosynthesis protein PurH (510 aa).

The MGS-like domain maps to 1–145; sequence MSKRALISVS…KNFEDVLVVT (145 aa).

Belongs to the PurH family.

It carries out the reaction (6R)-10-formyltetrahydrofolate + 5-amino-1-(5-phospho-beta-D-ribosyl)imidazole-4-carboxamide = 5-formamido-1-(5-phospho-D-ribosyl)imidazole-4-carboxamide + (6S)-5,6,7,8-tetrahydrofolate. The catalysed reaction is IMP + H2O = 5-formamido-1-(5-phospho-D-ribosyl)imidazole-4-carboxamide. Its pathway is purine metabolism; IMP biosynthesis via de novo pathway; 5-formamido-1-(5-phospho-D-ribosyl)imidazole-4-carboxamide from 5-amino-1-(5-phospho-D-ribosyl)imidazole-4-carboxamide (10-formyl THF route): step 1/1. It participates in purine metabolism; IMP biosynthesis via de novo pathway; IMP from 5-formamido-1-(5-phospho-D-ribosyl)imidazole-4-carboxamide: step 1/1. This Oceanobacillus iheyensis (strain DSM 14371 / CIP 107618 / JCM 11309 / KCTC 3954 / HTE831) protein is Bifunctional purine biosynthesis protein PurH.